The chain runs to 174 residues: Soma ferritin (174 aa).

Residues 8 to 157 enclose the Ferritin-like diiron domain; sequence QNYHAESEAG…DYITNLKRVG (150 aa). 5 residues coordinate Fe cation: Glu-25, Glu-60, His-63, Glu-105, and Gln-139.

Belongs to the ferritin family. In terms of assembly, oligomer of 12 or 24 subunits. The functional molecule is roughly spherical and contains a central cavity into which the polymeric mineral iron core is deposited. As to expression, expressed in somatic tissues but not in oocytes.

The protein resides in the cytoplasm. The catalysed reaction is 4 Fe(2+) + O2 + 4 H(+) = 4 Fe(3+) + 2 H2O. Its function is as follows. Stores iron in a soluble, non-toxic, readily available form. Important for iron homeostasis. Has ferroxidase activity. Iron is taken up in the ferrous form and deposited as ferric hydroxides after oxidation. This is Soma ferritin from Lymnaea stagnalis (Great pond snail).